The following is a 525-amino-acid chain: GMP synthase [glutamine-hydrolyzing] (525 aa).

A Glutamine amidotransferase type-1 domain is found at 8-207; sequence KILILDFGSQ…ALDICGCAAN (200 aa). Cysteine 85 serves as the catalytic Nucleophile. Residues histidine 181 and glutamate 183 contribute to the active site. The GMPS ATP-PPase domain occupies 208-400; sequence WKPSSIIEDA…LGLPYNMLYR (193 aa). 235–241 contacts ATP; sequence SGGVDSS.

Homodimer.

The catalysed reaction is XMP + L-glutamine + ATP + H2O = GMP + L-glutamate + AMP + diphosphate + 2 H(+). The protein operates within purine metabolism; GMP biosynthesis; GMP from XMP (L-Gln route): step 1/1. Functionally, catalyzes the synthesis of GMP from XMP. This is GMP synthase [glutamine-hydrolyzing] from Shewanella baltica (strain OS223).